Reading from the N-terminus, the 360-residue chain is Aminomethyltransferase (360 aa).

This sequence belongs to the GcvT family. In terms of assembly, the glycine cleavage system is composed of four proteins: P, T, L and H.

The catalysed reaction is N(6)-[(R)-S(8)-aminomethyldihydrolipoyl]-L-lysyl-[protein] + (6S)-5,6,7,8-tetrahydrofolate = N(6)-[(R)-dihydrolipoyl]-L-lysyl-[protein] + (6R)-5,10-methylene-5,6,7,8-tetrahydrofolate + NH4(+). Functionally, the glycine cleavage system catalyzes the degradation of glycine. This is Aminomethyltransferase from Exiguobacterium sibiricum (strain DSM 17290 / CCUG 55495 / CIP 109462 / JCM 13490 / 255-15).